The following is a 289-amino-acid chain: Iron-sulfur cluster carrier protein (289 aa).

Positions 1 to 18 (MAEECSGNCDSCGSSSDC) are enriched in low complexity. A disordered region spans residues 1–20 (MAEECSGNCDSCGSSSDCSD). Residue 48 to 55 (GKGGVGKS) participates in ATP binding.

Belongs to the Mrp/NBP35 ATP-binding proteins family. In terms of assembly, homodimer.

Its function is as follows. Binds and transfers iron-sulfur (Fe-S) clusters to target apoproteins. Can hydrolyze ATP. In Methanococcus maripaludis (strain DSM 14266 / JCM 13030 / NBRC 101832 / S2 / LL), this protein is Iron-sulfur cluster carrier protein.